The chain runs to 263 residues: Very long chain fatty acid elongase F (263 aa).

The next 7 helical transmembrane spans lie at 10–30 (IPVFSDPWITMATLSGYLLFV), 55–75 (IFQILYNGLILVLGVHFLFVL), 98–118 (LICILYMLNKFVDLVETIFFV), 135–155 (FAMAFLGYLYYYFHGYGGVAF), 159–179 (LCLLNTAVHVIMYAYYYLSSI), 193–213 (ITIAQLVQFGIILLHCTITLA), and 223–243 (LTYGCGSLSAFFAVIFSQFYY).

This sequence belongs to the ELO family. In terms of tissue distribution, no expression in adults.

It is found in the endoplasmic reticulum membrane. The enzyme catalyses a very-long-chain acyl-CoA + malonyl-CoA + H(+) = a very-long-chain 3-oxoacyl-CoA + CO2 + CoA. In terms of biological role, condensing enzyme that elongates saturated and monounsaturated very long chain fatty acids, to yield products up to 30 carbons in length. In Drosophila simulans (Fruit fly), this protein is Very long chain fatty acid elongase F.